The primary structure comprises 1257 residues: Stromal processing peptidase, chloroplastic (1257 aa).

The transit peptide at 1–142 (MAASTSTSSL…ASVKRVQLPH (142 aa)) directs the protein to the chloroplast. His-236 is a Zn(2+) binding site. Glu-239 acts as the Proton acceptor in catalysis. Zn(2+) is bound at residue His-240. Glu-309 is an active-site residue. Zn(2+) is bound at residue Glu-316. The disordered stretch occupies residues 1233–1257 (EEAGEGYPGVLPMGRGLSTMTRPTT).

Belongs to the peptidase M16 family. Requires Zn(2+) as cofactor.

The protein localises to the plastid. Its subcellular location is the chloroplast stroma. Cleaves presequences (transit peptides) from chloroplastic protein precursors. Initially recognizes a precursor by binding to the C-terminus of its transit peptide and then removes the transit peptide in a single endoproteolytic step. In a next step, pursues the cleavage of transit peptide to a subfragment form. This chain is Stromal processing peptidase, chloroplastic, found in Pisum sativum (Garden pea).